The chain runs to 87 residues: Sec-independent protein translocase protein TatA (87 aa).

A helical transmembrane segment spans residues 3 to 23; that stretch reads GTFSWTHLLIIALLFVVLFGA. Residues 47–87 are disordered; the sequence is MQHETPQANAAPVQQPAQQLPPAQPAQAPAQPVNQAEQKSA. Residues 52–87 are compositionally biased toward low complexity; that stretch reads PQANAAPVQQPAQQLPPAQPAQAPAQPVNQAEQKSA.

It belongs to the TatA/E family. In terms of assembly, the Tat system comprises two distinct complexes: a TatABC complex, containing multiple copies of TatA, TatB and TatC subunits, and a separate TatA complex, containing only TatA subunits. Substrates initially bind to the TatABC complex, which probably triggers association of the separate TatA complex to form the active translocon.

It localises to the cell membrane. Its function is as follows. Part of the twin-arginine translocation (Tat) system that transports large folded proteins containing a characteristic twin-arginine motif in their signal peptide across membranes. TatA could form the protein-conducting channel of the Tat system. This Nocardia farcinica (strain IFM 10152) protein is Sec-independent protein translocase protein TatA.